The primary structure comprises 297 residues: UTP--glucose-1-phosphate uridylyltransferase (297 aa).

The protein belongs to the UDPGP type 2 family.

The catalysed reaction is alpha-D-glucose 1-phosphate + UTP + H(+) = UDP-alpha-D-glucose + diphosphate. The protein operates within carbohydrate metabolism; nucleotide-sugar metabolism. It functions in the pathway bacterial outer membrane biogenesis; lipopolysaccharide biosynthesis. The sequence is that of UTP--glucose-1-phosphate uridylyltransferase (galF) from Escherichia coli O157:H7.